Here is a 359-residue protein sequence, read N- to C-terminus: Protein mab-21-like 2 (359 aa).

The protein belongs to the mab-21 family. Expressed in the adult cerebellum and eye, with lower levels in the adult forebrain. In embryos at 10.5 days post-coitum strongly expressed in the rostral and distal regions of the developing neural retina, with no expression immediately adjacent to the closing optic fissure. Expression is also observed in the dorsal and ventral aspects of the developing forelimb bud and in the developing pharyngeal arches, as well as in the midbrain.

Its subcellular location is the nucleus. The protein localises to the cytoplasm. Required for several aspects of embryonic development including normal development of the eye, notochord, neural tube and other organ tissues, and for embryonic turning. The polypeptide is Protein mab-21-like 2 (Mab21l2) (Mus musculus (Mouse)).